Consider the following 277-residue polypeptide: Bifunctional protein FolD (277 aa).

NADP(+)-binding positions include 156–158 (GRS), Ser-183, and Ile-224.

It belongs to the tetrahydrofolate dehydrogenase/cyclohydrolase family. Homodimer.

It catalyses the reaction (6R)-5,10-methylene-5,6,7,8-tetrahydrofolate + NADP(+) = (6R)-5,10-methenyltetrahydrofolate + NADPH. The enzyme catalyses (6R)-5,10-methenyltetrahydrofolate + H2O = (6R)-10-formyltetrahydrofolate + H(+). It participates in one-carbon metabolism; tetrahydrofolate interconversion. Catalyzes the oxidation of 5,10-methylenetetrahydrofolate to 5,10-methenyltetrahydrofolate and then the hydrolysis of 5,10-methenyltetrahydrofolate to 10-formyltetrahydrofolate. The sequence is that of Bifunctional protein FolD from Kosmotoga olearia (strain ATCC BAA-1733 / DSM 21960 / TBF 19.5.1).